Reading from the N-terminus, the 132-residue chain is Small ribosomal subunit protein uS8 (132 aa).

It belongs to the universal ribosomal protein uS8 family. In terms of assembly, part of the 30S ribosomal subunit. Contacts proteins S5 and S12.

One of the primary rRNA binding proteins, it binds directly to 16S rRNA central domain where it helps coordinate assembly of the platform of the 30S subunit. This chain is Small ribosomal subunit protein uS8, found in Francisella tularensis subsp. tularensis (strain FSC 198).